We begin with the raw amino-acid sequence, 53 residues long: Weak toxin NWT (53 aa).

3 disulfides stabilise this stretch: Cys-6–Cys-11, Cys-17–Cys-33, and Cys-37–Cys-48.

This sequence belongs to the three-finger toxin family. Ancestral subfamily. Orphan group II sub-subfamily. As to expression, expressed by the venom gland.

It localises to the secreted. Its function is as follows. Binds with low affinity and weakly inhibits muscle nicotinic acetylcholine receptor (nAChR). This Naja kaouthia (Monocled cobra) protein is Weak toxin NWT.